The sequence spans 182 residues: Adenine phosphoribosyltransferase (182 aa).

The protein belongs to the purine/pyrimidine phosphoribosyltransferase family. In terms of assembly, homodimer.

It is found in the cytoplasm. The catalysed reaction is AMP + diphosphate = 5-phospho-alpha-D-ribose 1-diphosphate + adenine. It functions in the pathway purine metabolism; AMP biosynthesis via salvage pathway; AMP from adenine: step 1/1. Catalyzes a salvage reaction resulting in the formation of AMP, that is energically less costly than de novo synthesis. This Koribacter versatilis (strain Ellin345) protein is Adenine phosphoribosyltransferase.